Here is a 143-residue protein sequence, read N- to C-terminus: Large-conductance mechanosensitive channel (143 aa).

Transmembrane regions (helical) follow at residues 10–30 (FAVKGNVMDLAVGVIIGGAFS) and 89–109 (GSFITVAINFVILAFIIFLMV).

This sequence belongs to the MscL family. In terms of assembly, homopentamer.

Its subcellular location is the cell inner membrane. Its function is as follows. Channel that opens in response to stretch forces in the membrane lipid bilayer. May participate in the regulation of osmotic pressure changes within the cell. The chain is Large-conductance mechanosensitive channel from Burkholderia cenocepacia (strain ATCC BAA-245 / DSM 16553 / LMG 16656 / NCTC 13227 / J2315 / CF5610) (Burkholderia cepacia (strain J2315)).